A 322-amino-acid polypeptide reads, in one-letter code: N-acetyl-gamma-glutamyl-phosphate reductase (322 aa).

The active site involves Cys132.

This sequence belongs to the NAGSA dehydrogenase family. Type 1 subfamily.

It is found in the cytoplasm. The enzyme catalyses N-acetyl-L-glutamate 5-semialdehyde + phosphate + NADP(+) = N-acetyl-L-glutamyl 5-phosphate + NADPH + H(+). Its pathway is amino-acid biosynthesis; L-arginine biosynthesis; N(2)-acetyl-L-ornithine from L-glutamate: step 3/4. In terms of biological role, catalyzes the NADPH-dependent reduction of N-acetyl-5-glutamyl phosphate to yield N-acetyl-L-glutamate 5-semialdehyde. The polypeptide is N-acetyl-gamma-glutamyl-phosphate reductase (Parabacteroides distasonis (strain ATCC 8503 / DSM 20701 / CIP 104284 / JCM 5825 / NCTC 11152)).